Here is a 528-residue protein sequence, read N- to C-terminus: UDP-glucuronosyltransferase 2B10 (528 aa).

The signal sequence occupies residues 1–23 (MALKWTTVLLIQLSFYFSSGSCG). Asn66 is a glycosylation site (N-linked (GlcNAc...) asparagine). Lys134 carries the post-translational modification N6-succinyllysine. N-linked (GlcNAc...) asparagine glycans are attached at residues Asn314 and Asn481. Residues 492–512 (VIGFLLACVATVLFIITKCCL) form a helical membrane-spanning segment.

It belongs to the UDP-glycosyltransferase family.

The protein localises to the microsome membrane. The protein resides in the endoplasmic reticulum membrane. It carries out the reaction glucuronate acceptor + UDP-alpha-D-glucuronate = acceptor beta-D-glucuronoside + UDP + H(+). Its function is as follows. UDPGT is of major importance in the conjugation and subsequent elimination of potentially toxic xenobiotics and endogenous compounds. This chain is UDP-glucuronosyltransferase 2B10 (UGT2B10), found in Homo sapiens (Human).